The following is a 440-amino-acid chain: Proline--tRNA ligase (440 aa).

Belongs to the class-II aminoacyl-tRNA synthetase family. ProS type 2 subfamily. In terms of assembly, homodimer.

The protein localises to the cytoplasm. It catalyses the reaction tRNA(Pro) + L-proline + ATP = L-prolyl-tRNA(Pro) + AMP + diphosphate. Catalyzes the attachment of proline to tRNA(Pro) in a two-step reaction: proline is first activated by ATP to form Pro-AMP and then transferred to the acceptor end of tRNA(Pro). The protein is Proline--tRNA ligase of Rhizobium leguminosarum bv. trifolii (strain WSM2304).